A 660-amino-acid polypeptide reads, in one-letter code: Poly(A)-specific ribonuclease PARN (660 aa).

Residues aspartate 28 and glutamate 30 each contribute to the a divalent metal cation site. An R3H domain is found at 177-243; that stretch reads REFIRSVEEK…ERFIQISKVD (67 aa). A divalent metal cation contacts are provided by aspartate 290 and aspartate 380. A phosphoserine mark is found at serine 560 and serine 614. A disordered region spans residues 606–660; it reads ADEGGASVSPVAEEAELDEFSANQSQGKRSRKHKKRKSDASETTPPALFDVPQVW. The segment covering 633–642 has biased composition (basic residues); the sequence is KRSRKHKKRK. Serine 643 bears the Phosphoserine mark. Residue threonine 649 is modified to Phosphothreonine.

This sequence belongs to the CAF1 family. A divalent metal cation serves as cofactor.

The protein resides in the cytoplasm. The protein localises to the nucleus. It carries out the reaction Exonucleolytic cleavage of poly(A) to 5'-AMP.. Functionally, 3'-exoribonuclease that has a preference for poly(A) tails of mRNAs, thereby efficiently degrading poly(A) tails. Exonucleolytic degradation of the poly(A) tail is often the first step in the decay of eukaryotic mRNAs and is also used to silence certain maternal mRNAs translationally during oocyte maturation and early embryonic development. This Danio rerio (Zebrafish) protein is Poly(A)-specific ribonuclease PARN (parn).